A 331-amino-acid polypeptide reads, in one-letter code: Ketol-acid reductoisomerase (NADP(+)) (331 aa).

Positions 2 to 182 (ARMYYDEDAN…GGTRGGVLET (181 aa)) constitute a KARI N-terminal Rossmann domain. Residues 25-28 (YGSQ), Ser51, Ser53, and 83-86 (DEVQ) each bind NADP(+). His108 is a catalytic residue. Gly134 serves as a coordination point for NADP(+). Residues 183–328 (TFREETETDL…KDLRAMFSWL (146 aa)) enclose the KARI C-terminal knotted domain. Residues Asp191, Glu195, Glu227, and Glu231 each coordinate Mg(2+). Residue Ser252 coordinates substrate.

It belongs to the ketol-acid reductoisomerase family. It depends on Mg(2+) as a cofactor.

It carries out the reaction (2R)-2,3-dihydroxy-3-methylbutanoate + NADP(+) = (2S)-2-acetolactate + NADPH + H(+). It catalyses the reaction (2R,3R)-2,3-dihydroxy-3-methylpentanoate + NADP(+) = (S)-2-ethyl-2-hydroxy-3-oxobutanoate + NADPH + H(+). The protein operates within amino-acid biosynthesis; L-isoleucine biosynthesis; L-isoleucine from 2-oxobutanoate: step 2/4. It participates in amino-acid biosynthesis; L-valine biosynthesis; L-valine from pyruvate: step 2/4. Functionally, involved in the biosynthesis of branched-chain amino acids (BCAA). Catalyzes an alkyl-migration followed by a ketol-acid reduction of (S)-2-acetolactate (S2AL) to yield (R)-2,3-dihydroxy-isovalerate. In the isomerase reaction, S2AL is rearranged via a Mg-dependent methyl migration to produce 3-hydroxy-3-methyl-2-ketobutyrate (HMKB). In the reductase reaction, this 2-ketoacid undergoes a metal-dependent reduction by NADPH to yield (R)-2,3-dihydroxy-isovalerate. The protein is Ketol-acid reductoisomerase (NADP(+)) of Nostoc sp. (strain PCC 7120 / SAG 25.82 / UTEX 2576).